The chain runs to 122 residues: Probable F-box protein At4g23960 (122 aa).

The 45-residue stretch at 1–45 folds into the F-box domain; it reads MIEQLFPEVTCYALRYLDYSSLCQLSMTSSSMRKTANDDVLWRAL.

The sequence is that of Probable F-box protein At4g23960 from Arabidopsis thaliana (Mouse-ear cress).